The chain runs to 202 residues: Probable thymidylate kinase (202 aa).

ATP is bound at residue G13–T20.

The protein belongs to the thymidylate kinase family.

It carries out the reaction dTMP + ATP = dTDP + ADP. In Picrophilus torridus (strain ATCC 700027 / DSM 9790 / JCM 10055 / NBRC 100828 / KAW 2/3), this protein is Probable thymidylate kinase.